Here is a 472-residue protein sequence, read N- to C-terminus: MLVLSSSAPPVLEVCKDRVSSSFSTSSSSSSSAFSAVVFRRSFFTRFNSSLICCCSSKLKLMADTALPSSSSSTSASASYSAAAKSVEEENHEIPVKKEDDNQLLRSRTYRNVRSAEELISEIKRESEIGRLPKSVAYAMEGLFHYYRNAVLSSGISHADEIVLSNMSVMLDFVLLDIEDPFVFPPFHKAIREPADYYSFGQDYIRPLVDFGNSYVGNIAIFQEMEEKLKQGDNIILMSNHQSEADPAVIALLLEKTNSLIAENLIYIAGDRVITDPLCKPFSMGRNLLCVYSKKHMYDDPELVDVKKRANTRSLKELVLLLRGGSKIIWIAPSGGRDRPDAVTGEWYPGTFDFAALDNMRRLVEHAGRPGHIYPLALLCYDIMPPPAQVEKEIGEKRVMSFHGVGVSVEPEINYNDVSLGCKNDEEAKSVYGQALYNSVNEQYNVLKAAIHGKQGSGASTPTTSLSQPWAS.

The transit peptide at 1–102 (MLVLSSSAPP…EIPVKKEDDN (102 aa)) directs the protein to the chloroplast. The HXXXXD motif motif lies at 241-246 (HQSEAD).

Belongs to the GPAT/DAPAT family.

The protein resides in the plastid. It localises to the chloroplast stroma. The enzyme catalyses sn-glycerol 3-phosphate + an acyl-CoA = a 1-acyl-sn-glycero-3-phosphate + CoA. The protein operates within phospholipid metabolism; CDP-diacylglycerol biosynthesis; CDP-diacylglycerol from sn-glycerol 3-phosphate: step 1/3. In terms of biological role, esterifies acyl-group from acyl-ACP to the sn-1 position of glycerol-3-phosphate. The enzyme from chilling-resistant plants discriminates against non-fluid palmitic acid and selects oleic acid whereas the enzyme from sensitive plants accepts both fatty acids. This is an oleate-selective acyltransferase. The protein is Glycerol-3-phosphate acyltransferase, chloroplastic (GAT) of Spinacia oleracea (Spinach).